We begin with the raw amino-acid sequence, 92 residues long: Large ribosomal subunit protein bL25 (92 aa).

The protein belongs to the bacterial ribosomal protein bL25 family. Part of the 50S ribosomal subunit; part of the 5S rRNA/L5/L18/L25 subcomplex. Contacts the 5S rRNA. Binds to the 5S rRNA independently of L5 and L18.

Its function is as follows. This is one of the proteins that binds to the 5S RNA in the ribosome where it forms part of the central protuberance. The protein is Large ribosomal subunit protein bL25 of Vibrio campbellii (strain ATCC BAA-1116).